The following is a 101-amino-acid chain: uncharacterized protein (101 aa).

2 helical membrane-spanning segments follow: residues 3–23 (IVYE…LFLF) and 39–59 (AFLS…LIFF).

The protein resides in the membrane. This is an uncharacterized protein from Saccharomyces cerevisiae (strain ATCC 204508 / S288c) (Baker's yeast).